The sequence spans 1134 residues: Protocadherin-18 (1134 aa).

Residues 1–27 form the signal peptide; that stretch reads MYQMNAKMHFTFVFALLVVSFNLDVLG. 6 consecutive Cadherin domains span residues 28–137, 138–246, 247–354, 361–465, 466–576, and 582–697; these read KNLK…SPQF, SRSL…SPAF, EQQS…KPEI, PGKE…PPHF, QRSR…VPVV, and RNNT…APLD. Topologically, residues 28-699 are extracellular; sequence KNLKYRIYEE…SVSQAPLDVS (672 aa). N103 carries N-linked (GlcNAc...) asparagine glycosylation. N269 carries an N-linked (GlcNAc...) asparagine glycan. Residue N559 is glycosylated (N-linked (GlcNAc...) asparagine). A helical membrane pass occupies residues 700–720; sequence MIIIISLGAICAVLLVIMVLF. The Cytoplasmic portion of the chain corresponds to 721–1134; sequence ATRCNREKKD…NKLLQDVRQS (414 aa). 3 disordered regions span residues 768-800, 868-888, and 941-1003; these read TLPI…NSHQ, SLKD…DLGR, and DYRS…TSSL. The span at 791 to 800 shows a compositional bias: polar residues; that stretch reads GSRQSHNSHQ. Residues 868 to 877 show a composition bias toward basic and acidic residues; that stretch reads SLKDSGRGDS. Positions 892–1134 are interaction with DAB1; it reads IDRLLGEGFS…NKLLQDVRQS (243 aa).

In terms of assembly, interacts with DAB1.

It is found in the cell membrane. Potential calcium-dependent cell-adhesion protein. The chain is Protocadherin-18 (PCDH18) from Bos taurus (Bovine).